A 487-amino-acid chain; its full sequence is Phosphoglucosamine mutase (487 aa).

Ser-134 serves as the catalytic Phosphoserine intermediate. Mg(2+) is bound by residues Ser-134, Asp-277, Asp-279, and Asp-281. Position 134 is a phosphoserine (Ser-134).

The protein belongs to the phosphohexose mutase family. Mg(2+) is required as a cofactor. In terms of processing, activated by phosphorylation.

The enzyme catalyses alpha-D-glucosamine 1-phosphate = D-glucosamine 6-phosphate. Its function is as follows. Catalyzes the conversion of glucosamine-6-phosphate to glucosamine-1-phosphate. This is Phosphoglucosamine mutase from Gloeothece citriformis (strain PCC 7424) (Cyanothece sp. (strain PCC 7424)).